We begin with the raw amino-acid sequence, 299 residues long: UPF0603 protein OsI_019212, chloroplastic (299 aa).

Low complexity-rich tracts occupy residues 1 to 14 (METL…LSPL) and 22 to 36 (ASPA…SSPA). The transit peptide at 1-41 (METLLSPSTLLSPLRGSKKKPASPAASASSSSSSPARSVVS) directs the protein to the chloroplast. Disordered stretches follow at residues 1-60 (METL…WRGD) and 244-265 (PDPG…TKEE). Residues 42 to 98 (CALRRQQPPPQAVAAWRGDGGRGGGVGSWATFLQHGLAAAALSLAISMAPAPAPAVA) constitute a thylakoid transit peptide. Positions 252-265 (KDNKRESNFKTKEE) are enriched in basic and acidic residues. A helical transmembrane segment spans residues 276 to 296 (VVGGLLVIAFVVPMAQYYAYI).

The protein belongs to the UPF0603 family.

Its subcellular location is the plastid. It localises to the chloroplast thylakoid membrane. The polypeptide is UPF0603 protein OsI_019212, chloroplastic (Oryza sativa subsp. indica (Rice)).